The chain runs to 70 residues: Ranatuerin-2SN1 (70 aa).

A signal peptide spans 1 to 22 (MFTLKKSLLLIFFLGTISLSLC). Positions 23-40 (EKERDADDDEVEVIKQEE) are cleaved as a propeptide — removed in mature form. Cysteine 65 and cysteine 70 are joined by a disulfide.

This sequence belongs to the frog skin active peptide (FSAP) family. Ranatuerin subfamily. Expressed by the skin glands.

Its subcellular location is the secreted. In terms of biological role, antimicrobial peptide. Weakly active against P.faecalis X29. Not active against fungi. Shows very weak hemolytic activity against human erythrocytes. This chain is Ranatuerin-2SN1, found in Sylvirana spinulosa (Fine-spined frog).